We begin with the raw amino-acid sequence, 513 residues long: UDP-N-acetylmuramyl-tripeptide synthetase (513 aa).

Residue Ser-38 participates in UDP-N-acetyl-alpha-D-muramoyl-L-alanyl-D-glutamate binding. ATP is bound at residue 115–121 (GTKGKTT). UDP-N-acetyl-alpha-D-muramoyl-L-alanyl-D-glutamate-binding positions include 161-162 (TT), Ser-188, and Arg-196. An N6-carboxylysine modification is found at Lys-230.

Belongs to the MurCDEF family. MurE subfamily. Carboxylation is probably crucial for Mg(2+) binding and, consequently, for the gamma-phosphate positioning of ATP.

It localises to the cytoplasm. The protein operates within cell wall biogenesis; peptidoglycan biosynthesis. Its function is as follows. Catalyzes the addition of an amino acid to the nucleotide precursor UDP-N-acetylmuramoyl-L-alanyl-D-glutamate (UMAG) in the biosynthesis of bacterial cell-wall peptidoglycan. This is UDP-N-acetylmuramyl-tripeptide synthetase from Latilactobacillus sakei subsp. sakei (strain 23K) (Lactobacillus sakei subsp. sakei).